Reading from the N-terminus, the 100-residue chain is Aspartyl/glutamyl-tRNA(Asn/Gln) amidotransferase subunit C (100 aa).

This sequence belongs to the GatC family. As to quaternary structure, heterotrimer of A, B and C subunits.

The enzyme catalyses L-glutamyl-tRNA(Gln) + L-glutamine + ATP + H2O = L-glutaminyl-tRNA(Gln) + L-glutamate + ADP + phosphate + H(+). It carries out the reaction L-aspartyl-tRNA(Asn) + L-glutamine + ATP + H2O = L-asparaginyl-tRNA(Asn) + L-glutamate + ADP + phosphate + 2 H(+). In terms of biological role, allows the formation of correctly charged Asn-tRNA(Asn) or Gln-tRNA(Gln) through the transamidation of misacylated Asp-tRNA(Asn) or Glu-tRNA(Gln) in organisms which lack either or both of asparaginyl-tRNA or glutaminyl-tRNA synthetases. The reaction takes place in the presence of glutamine and ATP through an activated phospho-Asp-tRNA(Asn) or phospho-Glu-tRNA(Gln). The sequence is that of Aspartyl/glutamyl-tRNA(Asn/Gln) amidotransferase subunit C from Dictyoglomus turgidum (strain DSM 6724 / Z-1310).